We begin with the raw amino-acid sequence, 80 residues long: Large ribosomal subunit protein uL24 (80 aa).

It belongs to the universal ribosomal protein uL24 family. Part of the 50S ribosomal subunit.

Its function is as follows. One of two assembly initiator proteins, it binds directly to the 5'-end of the 23S rRNA, where it nucleates assembly of the 50S subunit. One of the proteins that surrounds the polypeptide exit tunnel on the outside of the subunit. The protein is Large ribosomal subunit protein uL24 of Prosthecochloris aestuarii (strain DSM 271 / SK 413).